The primary structure comprises 837 residues: Putative outer membrane protein assembly factor TP_0326 (837 aa).

An N-terminal signal peptide occupies residues 1-21 (MLKKASAFLIASCCVMSLAWA). Over 22 to 433 (QANDNWYEGK…ILNVEEQSTA (412 aa)) the chain is Periplasmic. POTRA domains follow at residues 31–105 (KPIS…VKER), 106–182 (PSVK…IQEG), 185–273 (TVVS…VVEG), 276–354 (YRYG…VVER), and 357–430 (SHVE…VEEQ). Residues 434-442 (NVQFGVTFS) traverse the membrane as a beta stranded segment. The Extracellular; loop L1 portion of the chain corresponds to 443–450 (GVGEAGTF). A beta stranded membrane pass occupies residues 451-461 (PLSLFCQWEEK). Residues 462-468 (NFLGKGN) are Periplasmic-facing. Residues 469-476 (EISVNATL) form a beta stranded membrane-spanning segment. Residues 477 to 478 (GS) lie on the Extracellular; loop L2 side of the membrane. Residues 479–489 (EAQSLKLGYVE) form a beta stranded membrane-spanning segment. Residues 490 to 499 (RWFLGSPLTV) are Periplasmic-facing. A beta stranded transmembrane segment spans residues 500–520 (GFDFELTHKNLFVYRAGSYGN). At 521-530 (GLPHPYTSRE) the chain is on the extracellular; loop L3 side. A beta stranded transmembrane segment spans residues 531 to 543 (QWASSPGLAESFR). At 544-554 (LKYSRFESAIG) the chain is on the periplasmic side. The chain crosses the membrane as a beta stranded span at residues 555–568 (AHTGYQWYPRYAVI). At 569–601 (RVNGGVDFRVVKNFYDKDNNQPFDLTVKEQLNW) the chain is on the extracellular; loop L4 side. The beta stranded transmembrane segment at 602–615 (TSINSFWTSVSFDG) threads the bilayer. Residues 616–623 (RDFAYDPS) lie on the Periplasmic side of the membrane. The beta stranded transmembrane segment at 624 to 636 (SGWFLGQRCTFNG) threads the bilayer. Topologically, residues 637–644 (LVPFLEKE) are extracellular; loop L5. A beta stranded membrane pass occupies residues 645–658 (HSFRSDTKAEFYVT). The Periplasmic portion of the chain corresponds to 659-667 (LLNYPVSAV). Residues 668-682 (WNLKFVLAFYTGVSV) form a beta stranded membrane-spanning segment. Over 683–724 (QTYYGRRKSENGKGNGVRSGALVIDGVLVGRGWSEDAKKNTG) the chain is Extracellular; loop L6. Residues 725–736 (DLLLHHWIEFRW) form a beta stranded membrane-spanning segment. The Periplasmic segment spans residues 737 to 741 (PLAHG). A beta stranded membrane pass occupies residues 742–756 (IVSFDFFFDAAMVYN). Residues 757-786 (IESQSPNGSSSASSSSSSSSSSSRTTSSEG) lie on the Extracellular; loop L7 side of the membrane. The interval 761 to 785 (SPNGSSSASSSSSSSSSSSRTTSSE) is disordered. Over residues 765–784 (SSSASSSSSSSSSSSRTTSS) the composition is skewed to low complexity. A beta stranded transmembrane segment spans residues 787 to 799 (LYKMSYGPGLRFT). At 800–802 (LPQ) the chain is on the periplasmic side. Residues 803–814 (FPLKLAFANTFT) form a beta stranded membrane-spanning segment. The Extracellular; loop L8 portion of the chain corresponds to 815-824 (SPGGIPKTKK). Residues 825–829 (NWNFV) form a beta stranded membrane-spanning segment. At 830 to 837 (LSFTVNNL) the chain is on the periplasmic side.

The protein belongs to the BamA family. In terms of assembly, part of 2 complexes of about 239 and 164 kDa.

It localises to the cell outer membrane. In terms of biological role, might be part of the outer membrane protein assembly complex, which is involved in assembly and insertion of beta-barrel proteins into the outer membrane. Its function is as follows. Both rabbit immune serum and rabbit antiserum specific for extracytoplasmic loop L4 promote bacteria internalization by rabbit peritoneal macrophages. Pools of human syphilitic sera from the USA and Columbia recognize both the N-terminal POTRA-containing and C-terminal beta-barrel domains as well as loop L4, showing this protein stimulates the immune system in both humans and rabbits. The chain is Putative outer membrane protein assembly factor TP_0326 (tp92) from Treponema pallidum (strain Nichols).